Here is a 314-residue protein sequence, read N- to C-terminus: tRNA pseudouridine synthase B (314 aa).

Aspartate 41 functions as the Nucleophile in the catalytic mechanism.

This sequence belongs to the pseudouridine synthase TruB family. Type 1 subfamily.

The enzyme catalyses uridine(55) in tRNA = pseudouridine(55) in tRNA. Functionally, responsible for synthesis of pseudouridine from uracil-55 in the psi GC loop of transfer RNAs. The polypeptide is tRNA pseudouridine synthase B (Prochlorococcus marinus (strain NATL1A)).